The chain runs to 192 residues: Probable nicotinate-nucleotide adenylyltransferase (192 aa).

This sequence belongs to the NadD family.

The enzyme catalyses nicotinate beta-D-ribonucleotide + ATP + H(+) = deamido-NAD(+) + diphosphate. It functions in the pathway cofactor biosynthesis; NAD(+) biosynthesis; deamido-NAD(+) from nicotinate D-ribonucleotide: step 1/1. Its function is as follows. Catalyzes the reversible adenylation of nicotinate mononucleotide (NaMN) to nicotinic acid adenine dinucleotide (NaAD). The polypeptide is Probable nicotinate-nucleotide adenylyltransferase (Rhizobium leguminosarum bv. trifolii (strain WSM2304)).